A 309-amino-acid chain; its full sequence is Aspartate carbamoyltransferase catalytic subunit (309 aa).

Carbamoyl phosphate-binding residues include Arg55 and Thr56. Lys85 is an L-aspartate binding site. Carbamoyl phosphate is bound by residues Arg106, His135, and Gln138. L-aspartate-binding residues include Arg168 and Arg230. Residues Leu268 and Pro269 each coordinate carbamoyl phosphate.

The protein belongs to the aspartate/ornithine carbamoyltransferase superfamily. ATCase family. Heterododecamer (2C3:3R2) of six catalytic PyrB chains organized as two trimers (C3), and six regulatory PyrI chains organized as three dimers (R2).

The catalysed reaction is carbamoyl phosphate + L-aspartate = N-carbamoyl-L-aspartate + phosphate + H(+). Its pathway is pyrimidine metabolism; UMP biosynthesis via de novo pathway; (S)-dihydroorotate from bicarbonate: step 2/3. Its function is as follows. Catalyzes the condensation of carbamoyl phosphate and aspartate to form carbamoyl aspartate and inorganic phosphate, the committed step in the de novo pyrimidine nucleotide biosynthesis pathway. The protein is Aspartate carbamoyltransferase catalytic subunit of Photobacterium profundum (strain SS9).